A 261-amino-acid polypeptide reads, in one-letter code: Type III pantothenate kinase (261 aa).

6-13 contacts ATP; it reads DVGNTNAK. 108–111 serves as a coordination point for substrate; sequence GADR. Catalysis depends on aspartate 110, which acts as the Proton acceptor. Residue threonine 134 coordinates ATP. Residue threonine 188 participates in substrate binding.

This sequence belongs to the type III pantothenate kinase family. Homodimer. NH4(+) serves as cofactor. K(+) is required as a cofactor.

It localises to the cytoplasm. It carries out the reaction (R)-pantothenate + ATP = (R)-4'-phosphopantothenate + ADP + H(+). Its pathway is cofactor biosynthesis; coenzyme A biosynthesis; CoA from (R)-pantothenate: step 1/5. Catalyzes the phosphorylation of pantothenate (Pan), the first step in CoA biosynthesis. The chain is Type III pantothenate kinase from Sphingopyxis alaskensis (strain DSM 13593 / LMG 18877 / RB2256) (Sphingomonas alaskensis).